Reading from the N-terminus, the 228-residue chain is Cytochrome c oxidase subunit 2 (228 aa).

The Mitochondrial intermembrane segment spans residues 1 to 14 (MAYPLQLGLQDASS). A helical transmembrane segment spans residues 15–45 (PIMEELTNFHDHTLMIVFLISSLVLYLISLM). The Mitochondrial matrix segment spans residues 46–59 (LTTKLIHTSTMDAQ). Residues 60 to 87 (EVETIWTILPAIILILIALPSLRILYMM) traverse the membrane as a helical segment. Over 88–228 (DEINNPVLTV…FENWSVSMTQ (141 aa)) the chain is Mitochondrial intermembrane. Cu cation contacts are provided by His-161, Cys-196, Glu-198, Cys-200, His-204, and Met-207. Glu-198 provides a ligand contact to Mg(2+).

It belongs to the cytochrome c oxidase subunit 2 family. Component of the cytochrome c oxidase (complex IV, CIV), a multisubunit enzyme composed of 14 subunits. The complex is composed of a catalytic core of 3 subunits MT-CO1, MT-CO2 and MT-CO3, encoded in the mitochondrial DNA, and 11 supernumerary subunits COX4I, COX5A, COX5B, COX6A, COX6B, COX6C, COX7A, COX7B, COX7C, COX8 and NDUFA4, which are encoded in the nuclear genome. The complex exists as a monomer or a dimer and forms supercomplexes (SCs) in the inner mitochondrial membrane with NADH-ubiquinone oxidoreductase (complex I, CI) and ubiquinol-cytochrome c oxidoreductase (cytochrome b-c1 complex, complex III, CIII), resulting in different assemblies (supercomplex SCI(1)III(2)IV(1) and megacomplex MCI(2)III(2)IV(2)). Found in a complex with TMEM177, COA6, COX18, COX20, SCO1 and SCO2. Interacts with TMEM177 in a COX20-dependent manner. Interacts with COX20. Interacts with COX16. Requires Cu cation as cofactor.

It localises to the mitochondrion inner membrane. The catalysed reaction is 4 Fe(II)-[cytochrome c] + O2 + 8 H(+)(in) = 4 Fe(III)-[cytochrome c] + 2 H2O + 4 H(+)(out). Component of the cytochrome c oxidase, the last enzyme in the mitochondrial electron transport chain which drives oxidative phosphorylation. The respiratory chain contains 3 multisubunit complexes succinate dehydrogenase (complex II, CII), ubiquinol-cytochrome c oxidoreductase (cytochrome b-c1 complex, complex III, CIII) and cytochrome c oxidase (complex IV, CIV), that cooperate to transfer electrons derived from NADH and succinate to molecular oxygen, creating an electrochemical gradient over the inner membrane that drives transmembrane transport and the ATP synthase. Cytochrome c oxidase is the component of the respiratory chain that catalyzes the reduction of oxygen to water. Electrons originating from reduced cytochrome c in the intermembrane space (IMS) are transferred via the dinuclear copper A center (CU(A)) of subunit 2 and heme A of subunit 1 to the active site in subunit 1, a binuclear center (BNC) formed by heme A3 and copper B (CU(B)). The BNC reduces molecular oxygen to 2 water molecules using 4 electrons from cytochrome c in the IMS and 4 protons from the mitochondrial matrix. The chain is Cytochrome c oxidase subunit 2 (MT-CO2) from Meriones shawi (Shaw's jird).